A 350-amino-acid chain; its full sequence is Protein-glutamate methylesterase/protein-glutamine glutaminase (350 aa).

In terms of domain architecture, Response regulatory spans 5-122 (RVLCVDDSAL…REGMLAYSEL (118 aa)). The residue at position 56 (aspartate 56) is a 4-aspartylphosphate. Residues 153 to 345 (LLSSEKLIAI…QRMLAQISAG (193 aa)) form the CheB-type methylesterase domain. Residues serine 165, histidine 191, and aspartate 287 contribute to the active site.

This sequence belongs to the CheB family. Phosphorylated by CheA. Phosphorylation of the N-terminal regulatory domain activates the methylesterase activity.

The protein resides in the cytoplasm. It catalyses the reaction [protein]-L-glutamate 5-O-methyl ester + H2O = L-glutamyl-[protein] + methanol + H(+). It carries out the reaction L-glutaminyl-[protein] + H2O = L-glutamyl-[protein] + NH4(+). In terms of biological role, involved in chemotaxis. Part of a chemotaxis signal transduction system that modulates chemotaxis in response to various stimuli. Catalyzes the demethylation of specific methylglutamate residues introduced into the chemoreceptors (methyl-accepting chemotaxis proteins or MCP) by CheR. Also mediates the irreversible deamidation of specific glutamine residues to glutamic acid. Does not interact with the C-terminal pentapeptide of the chemoreceptors. In Pectobacterium atrosepticum (strain SCRI 1043 / ATCC BAA-672) (Erwinia carotovora subsp. atroseptica), this protein is Protein-glutamate methylesterase/protein-glutamine glutaminase.